A 198-amino-acid polypeptide reads, in one-letter code: Glycerol-3-phosphate acyltransferase (198 aa).

The next 5 helical transmembrane spans lie at 2–22 (FITY…FALV), 53–75 (AGFI…PLIF), 79–98 (IHPL…PIFA), 113–133 (LLCY…TLLF), and 147–167 (IAAV…AMCL).

This sequence belongs to the PlsY family. In terms of assembly, probably interacts with PlsX.

Its subcellular location is the cell membrane. The enzyme catalyses an acyl phosphate + sn-glycerol 3-phosphate = a 1-acyl-sn-glycero-3-phosphate + phosphate. The protein operates within lipid metabolism; phospholipid metabolism. Its function is as follows. Catalyzes the transfer of an acyl group from acyl-phosphate (acyl-PO(4)) to glycerol-3-phosphate (G3P) to form lysophosphatidic acid (LPA). This enzyme utilizes acyl-phosphate as fatty acyl donor, but not acyl-CoA or acyl-ACP. The chain is Glycerol-3-phosphate acyltransferase from Bacillus cytotoxicus (strain DSM 22905 / CIP 110041 / 391-98 / NVH 391-98).